The following is a 298-amino-acid chain: UDP-3-O-acyl-N-acetylglucosamine deacetylase (298 aa).

His75, His232, and Asp236 together coordinate Zn(2+). Catalysis depends on His259, which acts as the Proton donor.

This sequence belongs to the LpxC family. Zn(2+) serves as cofactor.

It catalyses the reaction a UDP-3-O-[(3R)-3-hydroxyacyl]-N-acetyl-alpha-D-glucosamine + H2O = a UDP-3-O-[(3R)-3-hydroxyacyl]-alpha-D-glucosamine + acetate. The protein operates within glycolipid biosynthesis; lipid IV(A) biosynthesis; lipid IV(A) from (3R)-3-hydroxytetradecanoyl-[acyl-carrier-protein] and UDP-N-acetyl-alpha-D-glucosamine: step 2/6. Functionally, catalyzes the hydrolysis of UDP-3-O-myristoyl-N-acetylglucosamine to form UDP-3-O-myristoylglucosamine and acetate, the committed step in lipid A biosynthesis. The polypeptide is UDP-3-O-acyl-N-acetylglucosamine deacetylase (Nitratiruptor sp. (strain SB155-2)).